Here is a 388-residue protein sequence, read N- to C-terminus: 2-methylene-furan-3-one reductase (388 aa).

The N-terminal 60 residues, 1–60 (MEALLSSTTLQLKPLHPPSSFSSLHSPFSSISVLRVKGSKKAETFIQRSNFSTVLPLRVS), are a transit peptide targeting the chloroplast. Residues K125, 240–241 (GV), 263–266 (STGK), Y281, 330–332 (FVV), and 377–378 (RA) contribute to the NADP(+) site. Position 125 (K125) interacts with substrate.

This sequence belongs to the zinc-containing alcohol dehydrogenase family. Quinone oxidoreductase subfamily. Monomer.

Its subcellular location is the plastid. It localises to the chloroplast. It carries out the reaction 4-hydroxy-2,5-dimethyl-furan-3(2H)-one + NADP(+) = 4-hydroxy-5-methyl-2-methylenefuran-3(2H)-one + NADPH + H(+). Its function is as follows. Enone oxidoreductase involved in the biosynthesis of 4-hydroxy-2,5-dimethyl-3(2H)-furanone (HDMF or furaneol). Can use both NADH and NADPH as the electron donor. The protein is 2-methylene-furan-3-one reductase (EO) of Solanum lycopersicum (Tomato).